We begin with the raw amino-acid sequence, 415 residues long: uncharacterized protein (415 aa).

4 residues coordinate [4Fe-4S] cluster: Cys-66, Cys-72, Cys-75, and Cys-149. S-adenosyl-L-methionine contacts are provided by Gln-249, Phe-276, Glu-296, and Asp-344. The active-site Nucleophile is Cys-370.

The protein belongs to the class I-like SAM-binding methyltransferase superfamily. RNA M5U methyltransferase family.

This is an uncharacterized protein from Brucella melitensis biotype 1 (strain ATCC 23456 / CCUG 17765 / NCTC 10094 / 16M).